Here is a 509-residue protein sequence, read N- to C-terminus: ATP synthase subunit alpha (509 aa).

An ATP-binding site is contributed by 169-176; the sequence is GDRQTGKT.

This sequence belongs to the ATPase alpha/beta chains family. F-type ATPases have 2 components, CF(1) - the catalytic core - and CF(0) - the membrane proton channel. CF(1) has five subunits: alpha(3), beta(3), gamma(1), delta(1), epsilon(1). CF(0) has three main subunits: a(1), b(2) and c(9-12). The alpha and beta chains form an alternating ring which encloses part of the gamma chain. CF(1) is attached to CF(0) by a central stalk formed by the gamma and epsilon chains, while a peripheral stalk is formed by the delta and b chains.

The protein resides in the cell inner membrane. The enzyme catalyses ATP + H2O + 4 H(+)(in) = ADP + phosphate + 5 H(+)(out). Produces ATP from ADP in the presence of a proton gradient across the membrane. The alpha chain is a regulatory subunit. The sequence is that of ATP synthase subunit alpha from Mesorhizobium japonicum (strain LMG 29417 / CECT 9101 / MAFF 303099) (Mesorhizobium loti (strain MAFF 303099)).